Here is a 390-residue protein sequence, read N- to C-terminus: Chorismate synthase (390 aa).

An NADP(+)-binding site is contributed by Arg-48. FMN contacts are provided by residues 126 to 128 (RAS), Gly-286, 301 to 305 (KPTSS), and Arg-328.

Belongs to the chorismate synthase family. The cofactor is FMNH2.

The catalysed reaction is 5-O-(1-carboxyvinyl)-3-phosphoshikimate = chorismate + phosphate. The protein operates within metabolic intermediate biosynthesis; chorismate biosynthesis; chorismate from D-erythrose 4-phosphate and phosphoenolpyruvate: step 7/7. Catalyzes the anti-1,4-elimination of the C-3 phosphate and the C-6 proR hydrogen from 5-enolpyruvylshikimate-3-phosphate (EPSP) to yield chorismate, which is the branch point compound that serves as the starting substrate for the three terminal pathways of aromatic amino acid biosynthesis. This reaction introduces a second double bond into the aromatic ring system. This is Chorismate synthase from Sulfurisphaera tokodaii (strain DSM 16993 / JCM 10545 / NBRC 100140 / 7) (Sulfolobus tokodaii).